Reading from the N-terminus, the 504-residue chain is MSPVTGEETPAEQQGTADNPVYVRRIMGLETEYGITNVLDGTRRLGPDEVSRLLFSPIVEKYRSSNIFTENASRLYLDVGAHPEIATAECDSLHQLLAYDRAGDELVQQLASRAEEELASNGIGGNVFLLKNNTDSMGNSYGCHENYLISRNVLLKHLSSQLLPFLVTRQLICGAGKLTIPSPGAPNENFEAGFMMSQRADYMWEGISSATTRSRPIINTRDEPHADSSKYRRLHVIVGDSNMSETTTALKIGSALLVLEMIEAGAELPNYELANEIRAIRDIARDFTGLTEVKLRSGETATPLEIQRTFHAAAVHWLEHRPEPECVDGRWLGTPREQLAPVVELWGRVLDCFETGDFSPVDTEIDWVIKKKLLHGMASRHGLEMTDPRLAQIDLRYHDIHPARGLFNVLKRRGQAASILGEEQIREAMDQAPATTRAALRGRFLTAAREHGCATTVDWMRLKINGEFGSEVALPNPFAATDPQVDEMIASMADLGDTDATARG.

Position 30 (E30) interacts with Mg(2+). Residue R74 coordinates ATP. A Mg(2+)-binding site is contributed by Y76. Residue D78 is the Proton acceptor of the active site. E84 is a binding site for Mg(2+). Residues T87 and W459 each coordinate ATP.

This sequence belongs to the Pup ligase/Pup deamidase family. Pup-conjugating enzyme subfamily.

It carries out the reaction ATP + [prokaryotic ubiquitin-like protein]-L-glutamate + [protein]-L-lysine = ADP + phosphate + N(6)-([prokaryotic ubiquitin-like protein]-gamma-L-glutamyl)-[protein]-L-lysine.. It participates in protein degradation; proteasomal Pup-dependent pathway. The protein operates within protein modification; protein pupylation. Catalyzes the covalent attachment of the prokaryotic ubiquitin-like protein modifier Pup to the proteasomal substrate proteins, thereby targeting them for proteasomal degradation. This tagging system is termed pupylation. The ligation reaction involves the side-chain carboxylate of the C-terminal glutamate of Pup and the side-chain amino group of a substrate lysine. The protein is Pup--protein ligase of Corynebacterium urealyticum (strain ATCC 43042 / DSM 7109).